The sequence spans 554 residues: MFS-type transporter tstD (554 aa).

Polar residues-rich tracts occupy residues 1-10 (MPEPFNSTMP) and 27-38 (QDSNQPPEMSAS). Residues 1–68 (MPEPFNSTMP…ESENNEPYSV (68 aa)) form a disordered region. Asn-6 carries an N-linked (GlcNAc...) asparagine glycan. Residues 39–48 (SEKKHPENEN) show a composition bias toward basic and acidic residues. A helical transmembrane segment spans residues 76-96 (LMVLAASLAGFFSPLSASIYY). Asn-107 and Asn-114 each carry an N-linked (GlcNAc...) asparagine glycan. 5 helical membrane passes run 115–135 (LTVTTYLILQGLAPMVTASFS), 142–162 (PGYAICFIVYLAANLGLALQN), 173–193 (LQSAGSSGAIAIANGVVSDII), 202–222 (IAFASVGSILGPSLSPIIGGL), and 231–251 (WIFWFLLIFSGAFCVPFFLFF). Residues 281–300 (KEKQRQQRAENEEENANRQR) are disordered. A run of 3 helical transmembrane segments spans residues 311 to 331 (VFVVFTNLQTVMTLCPAGVAF), 354 to 374 (IKVALIFLPMGVGGLISALST), and 413 to 433 (IALPVFCLGCVCTVLYGWLMT). Residue Asn-437 is glycosylated (N-linked (GlcNAc...) asparagine). 3 consecutive transmembrane segments (helical) span residues 442–462 (IILLFVMSWSFAAFYQVLNVL), 473–493 (MVTAVVNLLRCEIGAGMAAMI), and 504–524 (WSYTIIALIGVAATSPLLLTM).

Belongs to the major facilitator superfamily.

The protein resides in the membrane. Functionally, MFS-type transporter; part of the gene cluster that mediates the biosynthesis of the antihypercholesterolemic agents phomoidrides which are dimeric anhydrides. This Talaromyces stipitatus (strain ATCC 10500 / CBS 375.48 / QM 6759 / NRRL 1006) (Penicillium stipitatum) protein is MFS-type transporter tstD.